A 162-amino-acid polypeptide reads, in one-letter code: UPF0114 protein PA4574 (162 aa).

Transmembrane regions (helical) follow at residues 10–32 (YASRWLLAPIYMGLSLALLALTI), 53–75 (LILVLLSLIDMALVGGLLVMVMI), and 136–156 (LMWYVIIHMTFVLSAFAMGYL).

It belongs to the UPF0114 family.

The protein resides in the cell membrane. In Pseudomonas aeruginosa (strain ATCC 15692 / DSM 22644 / CIP 104116 / JCM 14847 / LMG 12228 / 1C / PRS 101 / PAO1), this protein is UPF0114 protein PA4574.